Consider the following 305-residue polypeptide: Tyrosine recombinase XerD (305 aa).

Residues 2 to 87 (SQGEAWADAF…AVRQFYRFVL (86 aa)) enclose the Core-binding (CB) domain. In terms of domain architecture, Tyr recombinase spans 108–295 (PLPKVLERDE…AGEHLAHIVQ (188 aa)). Catalysis depends on residues arginine 149, lysine 173, histidine 247, arginine 250, and histidine 273. Tyrosine 282 functions as the O-(3'-phospho-DNA)-tyrosine intermediate in the catalytic mechanism.

The protein belongs to the 'phage' integrase family. XerD subfamily. As to quaternary structure, forms a cyclic heterotetrameric complex composed of two molecules of XerC and two molecules of XerD.

The protein resides in the cytoplasm. Site-specific tyrosine recombinase, which acts by catalyzing the cutting and rejoining of the recombining DNA molecules. The XerC-XerD complex is essential to convert dimers of the bacterial chromosome into monomers to permit their segregation at cell division. It also contributes to the segregational stability of plasmids. The sequence is that of Tyrosine recombinase XerD from Caulobacter vibrioides (strain ATCC 19089 / CIP 103742 / CB 15) (Caulobacter crescentus).